The following is a 264-amino-acid chain: 3-methyl-2-oxobutanoate hydroxymethyltransferase (264 aa).

Positions 41 and 80 each coordinate Mg(2+). Residues 41 to 42, Asp80, and Lys109 contribute to the 3-methyl-2-oxobutanoate site; that span reads DS. A Mg(2+)-binding site is contributed by Glu111. The active-site Proton acceptor is the Glu178.

Belongs to the PanB family. In terms of assembly, homodecamer; pentamer of dimers. The cofactor is Mg(2+).

Its subcellular location is the cytoplasm. It catalyses the reaction 3-methyl-2-oxobutanoate + (6R)-5,10-methylene-5,6,7,8-tetrahydrofolate + H2O = 2-dehydropantoate + (6S)-5,6,7,8-tetrahydrofolate. It functions in the pathway cofactor biosynthesis; (R)-pantothenate biosynthesis; (R)-pantoate from 3-methyl-2-oxobutanoate: step 1/2. Functionally, catalyzes the reversible reaction in which hydroxymethyl group from 5,10-methylenetetrahydrofolate is transferred onto alpha-ketoisovalerate to form ketopantoate. The protein is 3-methyl-2-oxobutanoate hydroxymethyltransferase of Thermosipho melanesiensis (strain DSM 12029 / CIP 104789 / BI429).